Reading from the N-terminus, the 226-residue chain is UPF0502 protein Daci_5373 (226 aa).

It belongs to the UPF0502 family.

The protein is UPF0502 protein Daci_5373 of Delftia acidovorans (strain DSM 14801 / SPH-1).